The chain runs to 141 residues: Hemoglobin subunit alpha (141 aa).

In terms of domain architecture, Globin spans 1–141; that stretch reads VLSSKDKANI…VSTVLTSKYR (141 aa). Ser-3 is subject to Phosphoserine. Lys-7 and Lys-11 each carry N6-succinyllysine. Position 16 is an N6-acetyllysine; alternate (Lys-16). Lys-16 is subject to N6-succinyllysine; alternate. Tyr-24 is subject to Phosphotyrosine. Lys-40 carries the N6-succinyllysine modification. Residue Ser-49 is modified to Phosphoserine. His-58 is a binding site for O2. His-87 is a heme b binding site. The residue at position 102 (Ser-102) is a Phosphoserine. The residue at position 108 (Thr-108) is a Phosphothreonine. Residue Ser-124 is modified to Phosphoserine. Phosphothreonine is present on residues Thr-134 and Thr-137. Ser-138 carries the post-translational modification Phosphoserine.

It belongs to the globin family. Heterotetramer of two alpha chains and two beta chains. Red blood cells.

Its function is as follows. Involved in oxygen transport from the lung to the various peripheral tissues. Hemopressin acts as an antagonist peptide of the cannabinoid receptor CNR1. Hemopressin-binding efficiently blocks cannabinoid receptor CNR1 and subsequent signaling. The polypeptide is Hemoglobin subunit alpha (HBA) (Lama glama (Llama)).